The chain runs to 852 residues: Envelope glycoprotein gp160 (852 aa).

The first 31 residues, 1–31, serve as a signal peptide directing secretion; sequence MRARETRKNYQCLWRWGTMLLGMLMICSAAE. Residues 32-680 are Extracellular-facing; the sequence is NLWVTVYYGV…ITNWLWYIRI (649 aa). An intrachain disulfide couples Cys53 to Cys73. Residues Asn87, Asn129, Asn136, Asn141, Asn142, Asn155, Asn159, Asn189, and Asn198 are each glycosylated (N-linked (GlcNAc...) asparagine; by host). Intrachain disulfides connect Cys118–Cys206, Cys125–Cys197, Cys130–Cys156, Cys219–Cys248, and Cys229–Cys240. Residues 130-155 form a V1 region; the sequence is CTDYLGNATNTNNSSGGTVEKEEIKN. Residues 156–197 are V2; that stretch reads CSFNITTGIRDKVQKAYAYFYKLDVVPIDDDNTNTSYRLIHC. N-linked (GlcNAc...) asparagine; by host glycans are attached at residues Asn242, Asn263, Asn277, Asn290, and Asn296. The V3 stretch occupies residues 297–330; it reads CTRPNNNRRRRITSGPGKVLYTTGEIIGDIRKAY. The cysteines at positions 297 and 331 are disulfide-linked. Residues Asn332, Asn339, and Asn355 are each glycosylated (N-linked (GlcNAc...) asparagine; by host). A CD4-binding loop region spans residues 363–373; sequence SSGGDPEIVMH. 2 disulfide bridges follow: Cys377–Cys439 and Cys384–Cys412. The interval 384-412 is V4; it reads CNTTKLFNSTWNENSTWNATGNDTITLPC. N-linked (GlcNAc...) asparagine; by host glycans are attached at residues Asn385, Asn391, Asn397, Asn401, Asn405, Asn442, and Asn457. V5 regions lie at residues 455-466 and 457-466; these read DKNSTTEIFRPA and NSTTEIFRPA. Positions 507-528 are fusion peptide; the sequence is AVGVIGAMFLGFLGAAGSTMGA. The tract at residues 570–588 is immunosuppression; it reads KQLQARVLAVERYLRDQQL. Cys594 and Cys600 are oxidised to a cystine. Asn607, Asn612, Asn621, and Asn633 each carry an N-linked (GlcNAc...) asparagine; by host glycan. Residues 629–663 are a coiled coil; that stretch reads REIDNYTSLIYTLLEESQNQQEKNEQELLELDKWA. The segment at 658 to 679 is MPER; binding to GalCer; it reads ELDKWASLWNWFSITNWLWYIR. A helical membrane pass occupies residues 681–701; sequence FIMIVGGLIGLRIIFAVLSIV. Residues 702–852 lie on the Cytoplasmic side of the membrane; sequence NRVRQGYSPL…IRQGFERALL (151 aa). The YXXL motif; contains endocytosis signal motif lies at 708-711; sequence YSPL. Residues 717–739 form a disordered region; it reads IPAQRGPDRPEGIEEGGGERDRD. Over residues 722–739 the composition is skewed to basic and acidic residues; it reads GPDRPEGIEEGGGERDRD. Cys760 is lipidated: S-palmitoyl cysteine; by host. The Di-leucine internalization motif motif lies at 851-852; the sequence is LL.

The protein belongs to the HIV-1 env protein family. The mature envelope protein (Env) consists of a homotrimer of non-covalently associated gp120-gp41 heterodimers. The resulting complex protrudes from the virus surface as a spike. There seems to be as few as 10 spikes on the average virion. Interacts with host CD4, CCR5 and CXCR4. Gp120 also interacts with the C-type lectins CD209/DC-SIGN and CLEC4M/DC-SIGNR (collectively referred to as DC-SIGN(R)). Gp120 and gp41 interact with GalCer. Gp120 interacts with host ITGA4/ITGB7 complex; on CD4+ T-cells, this interaction results in rapid activation of integrin ITGAL/LFA-1, which facilitates efficient cell-to-cell spreading of HIV-1. Gp120 interacts with cell-associated heparan sulfate; this interaction increases virus infectivity on permissive cells and may be involved in infection of CD4- cells. As to quaternary structure, the mature envelope protein (Env) consists of a homotrimer of non-covalently associated gp120-gp41 heterodimers. The resulting complex protrudes from the virus surface as a spike. There seems to be as few as 10 spikes on the average virion. In terms of processing, highly glycosylated by host. The high number of glycan on the protein is reffered to as 'glycan shield' because it contributes to hide protein sequence from adaptive immune system. Palmitoylation of the transmembrane protein and of Env polyprotein (prior to its proteolytic cleavage) is essential for their association with host cell membrane lipid rafts. Palmitoylation is therefore required for envelope trafficking to classical lipid rafts, but not for viral replication. Post-translationally, specific enzymatic cleavages in vivo yield mature proteins. Envelope glycoproteins are synthesized as an inactive precursor that is heavily N-glycosylated and processed likely by host cell furin in the Golgi to yield the mature SU and TM proteins. The cleavage site between SU and TM requires the minimal sequence [KR]-X-[KR]-R. About 2 of the 9 disulfide bonds of gp41 are reduced by P4HB/PDI, following binding to CD4 receptor.

It localises to the virion membrane. The protein resides in the host cell membrane. Its subcellular location is the host endosome membrane. In terms of biological role, oligomerizes in the host endoplasmic reticulum into predominantly trimers. In a second time, gp160 transits in the host Golgi, where glycosylation is completed. The precursor is then proteolytically cleaved in the trans-Golgi and thereby activated by cellular furin or furin-like proteases to produce gp120 and gp41. Functionally, attaches the virus to the host lymphoid cell by binding to the primary receptor CD4. This interaction induces a structural rearrangement creating a high affinity binding site for a chemokine coreceptor like CXCR4 and/or CCR5. Acts as a ligand for CD209/DC-SIGN and CLEC4M/DC-SIGNR, which are respectively found on dendritic cells (DCs), and on endothelial cells of liver sinusoids and lymph node sinuses. These interactions allow capture of viral particles at mucosal surfaces by these cells and subsequent transmission to permissive cells. HIV subverts the migration properties of dendritic cells to gain access to CD4+ T-cells in lymph nodes. Virus transmission to permissive T-cells occurs either in trans (without DCs infection, through viral capture and transmission), or in cis (following DCs productive infection, through the usual CD4-gp120 interaction), thereby inducing a robust infection. In trans infection, bound virions remain infectious over days and it is proposed that they are not degraded, but protected in non-lysosomal acidic organelles within the DCs close to the cell membrane thus contributing to the viral infectious potential during DCs' migration from the periphery to the lymphoid tissues. On arrival at lymphoid tissues, intact virions recycle back to DCs' cell surface allowing virus transmission to CD4+ T-cells. Acts as a class I viral fusion protein. Under the current model, the protein has at least 3 conformational states: pre-fusion native state, pre-hairpin intermediate state, and post-fusion hairpin state. During fusion of viral and target intracellular membranes, the coiled coil regions (heptad repeats) assume a trimer-of-hairpins structure, positioning the fusion peptide in close proximity to the C-terminal region of the ectodomain. The formation of this structure appears to drive apposition and subsequent fusion of viral and target cell membranes. Complete fusion occurs in host cell endosomes and is dynamin-dependent, however some lipid transfer might occur at the plasma membrane. The virus undergoes clathrin-dependent internalization long before endosomal fusion, thus minimizing the surface exposure of conserved viral epitopes during fusion and reducing the efficacy of inhibitors targeting these epitopes. Membranes fusion leads to delivery of the nucleocapsid into the cytoplasm. The polypeptide is Envelope glycoprotein gp160 (Human immunodeficiency virus type 1 group M subtype B (isolate SF33) (HIV-1)).